The following is a 387-amino-acid chain: Erythronate-4-phosphate dehydrogenase (387 aa).

Ser-45 and Thr-67 together coordinate substrate. Asp-147 contributes to the NAD(+) binding site. Residue Arg-208 is part of the active site. Residue Asp-232 coordinates NAD(+). Glu-237 is a catalytic residue. His-254 acts as the Proton donor in catalysis. Position 257 (Gly-257) interacts with NAD(+). Tyr-258 is a binding site for substrate.

Belongs to the D-isomer specific 2-hydroxyacid dehydrogenase family. PdxB subfamily. In terms of assembly, homodimer.

The protein resides in the cytoplasm. It carries out the reaction 4-phospho-D-erythronate + NAD(+) = (R)-3-hydroxy-2-oxo-4-phosphooxybutanoate + NADH + H(+). It functions in the pathway cofactor biosynthesis; pyridoxine 5'-phosphate biosynthesis; pyridoxine 5'-phosphate from D-erythrose 4-phosphate: step 2/5. Its function is as follows. Catalyzes the oxidation of erythronate-4-phosphate to 3-hydroxy-2-oxo-4-phosphonooxybutanoate. The sequence is that of Erythronate-4-phosphate dehydrogenase from Shewanella violacea (strain JCM 10179 / CIP 106290 / LMG 19151 / DSS12).